The sequence spans 335 residues: Transcription factor bHLH63 (335 aa).

The segment at 110–160 (MTMNRDDLVEEGEEEKSKITEQNNGSTKSIKKMKHKAKKEENNFSNDSSKV) is disordered. In terms of domain architecture, bHLH spans 178-228 (QATDSHSIAERVRREKISERMKFLQDLVPGCDKITGKAGMLDEIINYVQSL).

Homodimer. Interacts with IBH1. Binds reversibly to CRY2 after blue light illumination. Expressed constitutively in roots, leaves, and stems.

The protein resides in the nucleus. Transcription factor that binds DNA to G box 5'-CACGTG-3' and, to a lower extent, to E-box 5'-CANNTG-3' in vitro. Binds to chromatin DNA of the FT gene and promotes its expression, and thus triggers flowering in response to blue light. The polypeptide is Transcription factor bHLH63 (BHLH63) (Arabidopsis thaliana (Mouse-ear cress)).